We begin with the raw amino-acid sequence, 538 residues long: Cryptic outer membrane porin BglH (538 aa).

A signal peptide spans 1-25; it reads MFRRNLITSAILLMAPLAFSAQSLA. The interval 52-82 is disordered; the sequence is KDEEKKKYTPATVNRSVSTNDQGYAANPFPT. Polar residues predominate over residues 62–73; it reads ATVNRSVSTNDQ.

Belongs to the porin LamB (TC 1.B.3) family. Homomonomer; no physical evidence of a homotrimer has been found, however conductance experiments suggest it may be a homotrimer. The monomer probably consists of 18 antiparallel beta-strands.

It localises to the cell outer membrane. Its function is as follows. Part of a cryptic operon that is poorly expressed in vivo. May be an ancestral sugar porin with a broad carbohydrate specificity; it binds aromatic beta-D-glucosides such as arbutin and salicin, but with low affinity compared to the binding of maltooligosaccharides to the LamB porin. The sequence is that of Cryptic outer membrane porin BglH (bglH) from Escherichia coli (strain K12).